The sequence spans 448 residues: tRNA methyltransferase 10 homolog C (448 aa).

The N-terminal 48 residues, 1–48, are a transit peptide targeting the mitochondrion; it reads MAFVNTLLRTIRCSAVHTLVQEGRSLSLLKASHQLTQSRKIMLSNHVR. Residues 137–165 adopt a coiled-coil conformation; sequence REVMKTNRKEKKKELKESKSKIESLDQLE. Positions 144–167 are disordered; it reads RKEKKKELKESKSKIESLDQLETK. Residues 190–382 enclose the SAM-dependent MTase TRM10-type domain; sequence QRWKCVQAMK…SFVPNRKHDG (193 aa). The tract at residues 429 to 448 is disordered; that stretch reads ERTDDTSIRSTRKRWWEEEN.

This sequence belongs to the class IV-like SAM-binding methyltransferase superfamily. TRM10 family. As to quaternary structure, component of mitochondrial ribonuclease P. Interacts with HSD17B10/MRPP2.

The protein resides in the mitochondrion matrix. Its subcellular location is the mitochondrion nucleoid. The catalysed reaction is adenosine(9) in tRNA + S-adenosyl-L-methionine = N(1)-methyladenosine(9) in tRNA + S-adenosyl-L-homocysteine + H(+). It carries out the reaction guanosine(9) in tRNA + S-adenosyl-L-methionine = N(1)-methylguanosine(9) in tRNA + S-adenosyl-L-homocysteine + H(+). It catalyses the reaction an adenosine in mRNA + S-adenosyl-L-methionine = an N(1)-methyladenosine in mRNA + S-adenosyl-L-homocysteine + H(+). Functionally, mitochondrial tRNA N(1)-methyltransferase involved in mitochondrial tRNA maturation. Component of mitochondrial ribonuclease P, which cleaves tRNA molecules in their 5'-ends. Together with hsd17b10/mrpp2, forms a subcomplex of the mitochondrial ribonuclease P, named MRPP1-MRPP2 subcomplex, which displays functions that are independent of the ribonuclease P activity. The MRPP1-MRPP2 subcomplex catalyzes the formation of N(1)-methylguanine and N(1)-methyladenine at position 9 (m1G9 and m1A9, respectively) in tRNAs; trmt10c/mrpp1 acting as the catalytic N(1)-methyltransferase subunit. The MRPP1-MRPP2 subcomplex also acts as a tRNA maturation platform: following 5'-end cleavage by the mitochondrial ribonuclease P complex, the MRPP1-MRPP2 subcomplex enhances the efficiency of 3'-processing catalyzed by ELAC2, retains the tRNA product after elac2 processing and presents the nascent tRNA to the mitochondrial CCA tRNA nucleotidyltransferase TRNT1 enzyme. In addition to tRNA N(1)-methyltransferase activity, trmt10c/mrpp1 also acts as a mRNA N(1)-methyltransferase by mediating methylation of adenosine residues at the N(1) position of MT-ND5 mRNA. This chain is tRNA methyltransferase 10 homolog C, found in Xenopus tropicalis (Western clawed frog).